A 269-amino-acid polypeptide reads, in one-letter code: Uncharacterised methyltransferase MT1546 (269 aa).

It belongs to the methyltransferase superfamily.

The sequence is that of Uncharacterised methyltransferase MT1546 from Mycobacterium tuberculosis (strain CDC 1551 / Oshkosh).